The sequence spans 522 residues: Lysine--tRNA ligase (522 aa).

The 'HIGH' region signature appears at 44-52 (PSGLPHIGT). Residues 290 to 294 (KISKS) carry the 'KMSKS' region motif. Residue Lys-293 coordinates ATP.

The protein belongs to the class-I aminoacyl-tRNA synthetase family.

It localises to the cytoplasm. The enzyme catalyses tRNA(Lys) + L-lysine + ATP = L-lysyl-tRNA(Lys) + AMP + diphosphate. This is Lysine--tRNA ligase from Rickettsia peacockii (strain Rustic).